Consider the following 188-residue polypeptide: GMP synthase [glutamine-hydrolyzing] subunit A (188 aa).

A Glutamine amidotransferase type-1 domain is found at 2–188 (KIAVIYFGGQ…FKNFIEACKK (187 aa)). Catalysis depends on Cys-79, which acts as the Nucleophile. Catalysis depends on residues His-166 and Glu-168.

Heterodimer composed of a glutamine amidotransferase subunit (A) and a GMP-binding subunit (B).

The catalysed reaction is XMP + L-glutamine + ATP + H2O = GMP + L-glutamate + AMP + diphosphate + 2 H(+). The protein operates within purine metabolism; GMP biosynthesis; GMP from XMP (L-Gln route): step 1/1. Functionally, catalyzes the synthesis of GMP from XMP. The polypeptide is GMP synthase [glutamine-hydrolyzing] subunit A (Sulfurisphaera tokodaii (strain DSM 16993 / JCM 10545 / NBRC 100140 / 7) (Sulfolobus tokodaii)).